A 269-amino-acid polypeptide reads, in one-letter code: NAD kinase (269 aa).

The active-site Proton acceptor is Asp45. NAD(+)-binding positions include Asp45–Gly46, Asn122–Glu123, Arg149, Asp151, and Ala186.

It belongs to the NAD kinase family. It depends on a divalent metal cation as a cofactor.

The protein localises to the cytoplasm. The catalysed reaction is NAD(+) + ATP = ADP + NADP(+) + H(+). Functionally, involved in the regulation of the intracellular balance of NAD and NADP, and is a key enzyme in the biosynthesis of NADP. Catalyzes specifically the phosphorylation on 2'-hydroxyl of the adenosine moiety of NAD to yield NADP. This is NAD kinase from Staphylococcus aureus (strain Mu3 / ATCC 700698).